Reading from the N-terminus, the 279-residue chain is Thymidylate synthase (279 aa).

R141–R142 provides a ligand contact to dUMP. C161 functions as the Nucleophile in the catalytic mechanism. DUMP-binding positions include R181–D184, N192, and H222–Y224. D184 is a binding site for (6R)-5,10-methylene-5,6,7,8-tetrahydrofolate. A (6R)-5,10-methylene-5,6,7,8-tetrahydrofolate-binding site is contributed by A278.

It belongs to the thymidylate synthase family. Bacterial-type ThyA subfamily. Homodimer.

The protein resides in the cytoplasm. It catalyses the reaction dUMP + (6R)-5,10-methylene-5,6,7,8-tetrahydrofolate = 7,8-dihydrofolate + dTMP. It functions in the pathway pyrimidine metabolism; dTTP biosynthesis. In terms of biological role, catalyzes the reductive methylation of 2'-deoxyuridine-5'-monophosphate (dUMP) to 2'-deoxythymidine-5'-monophosphate (dTMP) while utilizing 5,10-methylenetetrahydrofolate (mTHF) as the methyl donor and reductant in the reaction, yielding dihydrofolate (DHF) as a by-product. This enzymatic reaction provides an intracellular de novo source of dTMP, an essential precursor for DNA biosynthesis. This Bacillus licheniformis (strain ATCC 14580 / DSM 13 / JCM 2505 / CCUG 7422 / NBRC 12200 / NCIMB 9375 / NCTC 10341 / NRRL NRS-1264 / Gibson 46) protein is Thymidylate synthase.